Here is a 366-residue protein sequence, read N- to C-terminus: Aminomethyltransferase (366 aa).

It belongs to the GcvT family. In terms of assembly, the glycine cleavage system is composed of four proteins: P, T, L and H.

The enzyme catalyses N(6)-[(R)-S(8)-aminomethyldihydrolipoyl]-L-lysyl-[protein] + (6S)-5,6,7,8-tetrahydrofolate = N(6)-[(R)-dihydrolipoyl]-L-lysyl-[protein] + (6R)-5,10-methylene-5,6,7,8-tetrahydrofolate + NH4(+). Its function is as follows. The glycine cleavage system catalyzes the degradation of glycine. The protein is Aminomethyltransferase of Bacillus mycoides (strain KBAB4) (Bacillus weihenstephanensis).